We begin with the raw amino-acid sequence, 215 residues long: LexA repressor (215 aa).

A DNA-binding region (H-T-H motif) is located at residues 28 to 48 (RAEIAAELGFSSPNAAEEHLR). Residues Ser133 and Lys170 each act as for autocatalytic cleavage activity in the active site.

The protein belongs to the peptidase S24 family. In terms of assembly, homodimer.

The catalysed reaction is Hydrolysis of Ala-|-Gly bond in repressor LexA.. Its function is as follows. Represses a number of genes involved in the response to DNA damage (SOS response), including recA and lexA. In the presence of single-stranded DNA, RecA interacts with LexA causing an autocatalytic cleavage which disrupts the DNA-binding part of LexA, leading to derepression of the SOS regulon and eventually DNA repair. The protein is LexA repressor of Burkholderia ambifaria (strain MC40-6).